The following is a 565-amino-acid chain: MRRRRKTVVVAVVIRRVLIWAICVMTLLCFLTVHIYVAPFNRLPKLHLNHHNTRRGYIIDYNKSITEQSLTRNLSRPESNEIPLISNPKTNEIQYQSSISEHINNTELVPPHVSTSPSSSSKLNITSGIPDFDKLWKHPPNRNFVPCVSPNPSYTSPLESRGYLLVHTNGGLNQMRAGICDMVAIARIINATLVVPELDKRSFWQDTSKFSDVFDEDHFINALSKDIRVIKKLPKGIDGLTKVVKHFKSYSGLSYYQNEIASMWDEYKVIRAAKSDSRLANNNLPPDIQKLRCRACYEALRFSTKIRSMGELLVDRMRSYGLYIALHLRFEKEMLAFSGCNHGLSASEAAELRRIRKNTAYWKVKDIDGRVQRLKGYCPLTPKEVGILLTALGYSSDTPVYIAAGEIYGGESRLADLRSRFSMLMSKEKLATREELKTFMNHSTQMAALDYIVSIESDVFIPSYSGNMARAVEGHRRFLGHRKTISPDRKAIVRLVDRIGRGAEKDNRKVYERINEIHKTRQGSPRRRKGPASGTKGLERHRSEESFYENPLPDCLCQRDPSKAR.

A helical; Signal-anchor for type II membrane protein transmembrane segment spans residues 17-37 (VLIWAICVMTLLCFLTVHIYV). N-linked (GlcNAc...) asparagine glycosylation is found at Asn-62, Asn-73, Asn-104, Asn-124, and Asn-190. 327-329 (HLR) contributes to the substrate binding site. An N-linked (GlcNAc...) asparagine glycan is attached at Asn-441. The interval 515–565 (NEIHKTRQGSPRRRKGPASGTKGLERHRSEESFYENPLPDCLCQRDPSKAR) is disordered. Residues 520–530 (TRQGSPRRRKG) are compositionally biased toward basic residues.

Belongs to the glycosyltransferase GT106 family.

The protein resides in the membrane. The protein operates within glycan metabolism. The chain is O-fucosyltransferase 7 from Arabidopsis thaliana (Mouse-ear cress).